The chain runs to 130 residues: C-type natriuretic peptide 2 (130 aa).

An N-terminal signal peptide occupies residues 1 to 22; the sequence is MAASSSSFVPLVLLFLAIPVEP. Positions 23–103 are excised as a propeptide; the sequence is RPSMTRDEAQ…LQQQSKTTRR (81 aa). The interval 57-77 is disordered; it reads ELLPRRPGPPRSFGASPGALR. Cys-114 and Cys-130 are joined by a disulfide.

This sequence belongs to the natriuretic peptide family.

Its subcellular location is the secreted. Its function is as follows. Exhibits natriuretic and vasodepressant activity. Has cGMP-stimulating activity. May help to regulate body fluid homeostasis in a variety of aquatic environments. The chain is C-type natriuretic peptide 2 from Takifugu rubripes (Japanese pufferfish).